Here is a 654-residue protein sequence, read N- to C-terminus: MICOS complex subunit MIC60-2 (654 aa).

The transit peptide at 1-12 directs the protein to the mitochondrion; sequence MRGSRNLLTQRL. At 13-20 the chain is on the mitochondrial matrix side; sequence ASSRATGS. A helical transmembrane segment spans residues 21–43; the sequence is SGGLKFVGATVGAVTAGAAGVAG. Over 44–654 the chain is Mitochondrial intermembrane; sequence YASYDNEFRK…AALTSIRSTY (611 aa). A compositionally biased stretch (basic and acidic residues) spans 115–129; sequence LKETTEPKKIEKKPE. Residues 115 to 140 form a disordered region; that stretch reads LKETTEPKKIEKKPENPYIGAKTPLN.

Belongs to the MICOS complex subunit Mic60 family. In terms of assembly, component of the mitochondrial contact site and cristae organizing system (MICOS) complex. In terms of tissue distribution, expressed in the gonads and muscle cells.

It is found in the mitochondrion inner membrane. Its subcellular location is the cytoplasm. Functionally, sustains mitochondrial morphology probably through maintaining cristae morphology. May act as a component of the MICOS complex, a large protein complex of the mitochondria. This is MICOS complex subunit MIC60-2 from Caenorhabditis elegans.